Consider the following 510-residue polypeptide: MSHIPISNTIPTKQTDGNGKANISPDKLDPKVSIDMEAPEFKDFAKTMVDFIAEYLENIRERRVLPEVKPGYLKPLIPDAAPEKPEKWQDVMQDIERVIMPGVTHWHSPKFHAYFPTANSYPAIVADMLSGAIACIGFTWIASPACTELEVVMMDWLGKMLELPAEFLACSGGKGGGVIQGTASESTLVALLGAKAKKLKEVKELHPEWDEHTILGKLVGYCSDQAHSSVERAGLLGGVKLRSVQSENHRMRGAALEKAIEQDVAEGLIPFYAVVTLGTTNSCAFDYLDECGPVGNKHNLWIHVDAAYAGSAFICPEYRHLMKGIESADSFNFNPHKWMLVNFDCSAMWLKDPSWVVNAFNVDPLYLKHDMQGSAPDYRHWQIPLGRRFRALKLWFVLRLYGVENLQAHIRRHCNFAKQFGDLCVADSRFELAAEINMGLVCFRLKGSNERNEALLKRINGRGHIHLVPAKIKDVYFLRMAICSRFTQSEDMEYSWKEVSAAADEMEQEQ.

Residues 1–17 show a composition bias toward polar residues; that stretch reads MSHIPISNTIPTKQTDG. Residues 1 to 28 form a disordered region; that stretch reads MSHIPISNTIPTKQTDGNGKANISPDKL. Residue T117 coordinates substrate. Residues A183, S184, H227, D305, and N334 each contribute to the pyridoxal 5'-phosphate site. Position 227 (H227) interacts with substrate. H227 is a catalytic residue. K337 is modified (N6-(pyridoxal phosphate)lysine). The segment at 358-384 is disordered; that stretch reads NAFNVDPLYLKHDMQGSAPDYRHWQIP.

Belongs to the group II decarboxylase family. Homodimer. It depends on pyridoxal 5'-phosphate as a cofactor. Hypoderm isoform is expressed only in hypodermal epithelium and the CNS isoform only in central nervous system. Expressed in the adult head (at protein level).

It carries out the reaction L-dopa + H(+) = dopamine + CO2. The enzyme catalyses 5-hydroxy-L-tryptophan + H(+) = serotonin + CO2. Catalyzes the decarboxylation of L-3,4-dihydroxyphenylalanine (L-DOPA) to dopamine and L-5-hydroxytryptophan (5-HTP) to serotonin. Catalyzes the formation of serotonin more efficiently than dopamine. Displays no activity to tyrosine. Variation in the synthesis of bioamines may be a factor contributing to natural variation in life span. The polypeptide is Aromatic-L-amino-acid decarboxylase (Ddc) (Drosophila melanogaster (Fruit fly)).